A 467-amino-acid polypeptide reads, in one-letter code: MEEELAMLRQLIGQLQELLHNGSPPPPSSSSSLSSSSPSFLVLHHPQYQNGWCLPCIEDTSADDCCDIVMAGGKRPGIFKMLETVKPPVKRTRKERTQGKSCTEVDEISGNMDQEIWQEFPQDLFEDVVSRLPMATFFQFRAVCRKWNALIDSDSFSRCFTELPQTIPWFYTITHENVNSGQVYDPSLKKWHHPIIPALPKKSIVLPMASAGGLVCFLDIGHRNFYVSNPLTKSFRELPARSFKVWSRVAVGMTLNGNSTSHGYKVLWVGCEGEYEVYDSLSNVWTKRGTIPSNIKLPVLLNFKSQPVAIHSTLYFMLTDPEGILSYDMVSGKWKQFIIPGPPDLSDHTLAACGERLMLVGLLTKNAATCVCIWELQKMTLLWKEVDRMPNIWCLEFYGKHIRMNCLGNKGCLILLSLRSRQMNRLITYNAVTREWTKVPGCTVPRGRKRLWIACGTAFHPSPTARA.

Positions Gln-114–Leu-163 constitute an F-box domain. Kelch repeat units follow at residues Leu-163–Ala-211, Gly-252–Ser-305, and Cys-406–Gly-456.

In Arabidopsis thaliana (Mouse-ear cress), this protein is F-box only protein 6 (FBX6).